We begin with the raw amino-acid sequence, 197 residues long: Elongation factor Ts (197 aa).

The interval 81-84 (TDFV) is involved in Mg(2+) ion dislocation from EF-Tu.

The protein belongs to the EF-Ts family.

Its subcellular location is the cytoplasm. Its function is as follows. Associates with the EF-Tu.GDP complex and induces the exchange of GDP to GTP. It remains bound to the aminoacyl-tRNA.EF-Tu.GTP complex up to the GTP hydrolysis stage on the ribosome. The chain is Elongation factor Ts from Petrotoga mobilis (strain DSM 10674 / SJ95).